The chain runs to 134 residues: 4-carboxymuconolactone decarboxylase (134 aa).

Belongs to the carboxymuconolactone decarboxylase family.

The catalysed reaction is (R)-2-(carboxymethyl)-5-oxo-2,5-dihydro-2-furoate + H(+) = (4,5-dihydro-5-oxofuran-2-yl)-acetate + CO2. It functions in the pathway aromatic compound metabolism; beta-ketoadipate pathway; 5-oxo-4,5-dihydro-2-furylacetate from 3-carboxy-cis,cis-muconate: step 2/2. The sequence is that of 4-carboxymuconolactone decarboxylase (pcaC) from Acinetobacter baylyi (strain ATCC 33305 / BD413 / ADP1).